The primary structure comprises 411 residues: MERIPSAQPPPTCLPKAPGLEHGDLSGMDFAHMYQVYKSRRGIKRSEDSKETYKLPHRLIEKKRRDRINECIAQLKDLLPEHLKLTTLGHLEKAVVLELTLKHVKALTNLIDQQQQKIIALQSGLQAGDLSGRNLEAGQEMFCSGFQTCAREVLQYLAKHENTRDLKSSQLVTHLHRVVSELLQGGASRKPLDSAPKAVDLKEKPSFLAKGSEGPGKNCVPVIQRTFAPSGGEQSGSDTDTDSGYGGELEKGDLRSEQPYFKSDHGRRFAVGERVSTIKQESEEPPTKKSRMQLSEEEGHFAGSDLMGSPFLGPHPHQPPFCLPFYLIPPSATAYLPMLEKCWYPTSVPVLYPGLNTSAAALSSFMNPDKIPTPLLLPQRLPSPLAHSSLDSSALLQALKQIPPLNLETKD.

Residues 1–20 form a disordered region; it reads MERIPSAQPPPTCLPKAPGL. The tract at residues 1–139 is essential for interaction with BMAL1, E-box binding and repressor activity against the CLOCK-BMAL1 heterodimer; the sequence is MERIPSAQPP…LSGRNLEAGQ (139 aa). Residues 52 to 107 enclose the bHLH domain; it reads TYKLPHRLIEKKRRDRINECIAQLKDLLPEHLKLTTLGHLEKAVVLELTLKHVKAL. The interval 75–79 is necessary for interaction with RXRA and repressor activity against RXRA; it reads LKDLL. The Orange domain maps to 142–175; it reads FCSGFQTCAREVLQYLAKHENTRDLKSSQLVTHL. A Glycyl lysine isopeptide (Lys-Gly) (interchain with G-Cter in SUMO1, SUMO2 and SUMO3) cross-link involves residue Lys159. Lys167 is covalently cross-linked (Glycyl lysine isopeptide (Lys-Gly) (interchain with G-Cter in SUMO2)). The disordered stretch occupies residues 227–294; the sequence is FAPSGGEQSG…PPTKKSRMQL (68 aa). A Phosphoserine modification is found at Ser235. Over residues 248–271 the composition is skewed to basic and acidic residues; sequence ELEKGDLRSEQPYFKSDHGRRFAV. A Glycyl lysine isopeptide (Lys-Gly) (interchain with G-Cter in SUMO1); alternate cross-link involves residue Lys279. Lys279 participates in a covalent cross-link: Glycyl lysine isopeptide (Lys-Gly) (interchain with G-Cter in SUMO1, SUMO2 and SUMO3); alternate. Residue Lys279 forms a Glycyl lysine isopeptide (Lys-Gly) (interchain with G-Cter in SUMO2); alternate linkage. Lys288 participates in a covalent cross-link: Glycyl lysine isopeptide (Lys-Gly) (interchain with G-Cter in SUMO2). Ser383 bears the Phosphoserine mark.

Homodimer. Heterodimer with BHLHE41/DEC2. Interacts with ubiquitin-conjugating enzyme UBE2I/UBC9. Interacts with HDAC1, SUMO1, RXRA and BMAL1. Interacts with TCF3/E47. Ubiquitinated; which may lead to proteasomal degradation. Post-translationally, sumoylation inhibits its ubiquitination and promotes its negative regulation of the CLOCK-BMAL1 heterodimer transcriptional activator activity.

The protein resides in the cytoplasm. The protein localises to the nucleus. In terms of biological role, transcriptional repressor involved in the regulation of the circadian rhythm by negatively regulating the activity of the clock genes and clock-controlled genes. Acts as the negative limb of a novel autoregulatory feedback loop (DEC loop) which differs from the one formed by the PER and CRY transcriptional repressors (PER/CRY loop). Both these loops are interlocked as it represses the expression of PER1/2 and in turn is repressed by PER1/2 and CRY1/2. Represses the activity of the circadian transcriptional activator: CLOCK-BMAL1|BMAL2 heterodimer by competing for the binding to E-box elements (5'-CACGTG-3') found within the promoters of its target genes. Negatively regulates its own expression and the expression of DBP and BHLHE41/DEC2. Acts as a corepressor of RXR and the RXR-LXR heterodimers and represses the ligand-induced RXRA and NR1H3/LXRA transactivation activity. May function as a transcriptional factor for neuronal differentiation. Represses the transcription of NR0B2 and attentuates the transactivation of NR0B2 by the CLOCK-BMAL1 complex. Drives the circadian rhythm of blood pressure through transcriptional repression of ATP1B1 in the cardiovascular system. The sequence is that of Class E basic helix-loop-helix protein 40 (Bhlhe40) from Mus musculus (Mouse).